The following is a 500-amino-acid chain: tRNA modification GTPase MnmE (500 aa).

The (6S)-5-formyl-5,6,7,8-tetrahydrofolate site is built by R24, E120, and K159. The TrmE-type G domain occupies 256 to 420; that stretch reads GIPVAIIGET…LEKKLVQAAA (165 aa). N266 serves as a coordination point for K(+). GTP is bound by residues 266-271, 285-291, and 310-313; these read NAGKST, SDIHGTT, and DTAG. Residue S270 coordinates Mg(2+). The K(+) site is built by S285, I287, and T290. T291 is a binding site for Mg(2+). K500 lines the (6S)-5-formyl-5,6,7,8-tetrahydrofolate pocket.

It belongs to the TRAFAC class TrmE-Era-EngA-EngB-Septin-like GTPase superfamily. TrmE GTPase family. In terms of assembly, homodimer. Heterotetramer of two MnmE and two MnmG subunits. The cofactor is K(+).

The protein localises to the cytoplasm. Its function is as follows. Exhibits a very high intrinsic GTPase hydrolysis rate. Involved in the addition of a carboxymethylaminomethyl (cmnm) group at the wobble position (U34) of certain tRNAs, forming tRNA-cmnm(5)s(2)U34. The chain is tRNA modification GTPase MnmE from Phocaeicola vulgatus (strain ATCC 8482 / DSM 1447 / JCM 5826 / CCUG 4940 / NBRC 14291 / NCTC 11154) (Bacteroides vulgatus).